The sequence spans 225 residues: Ribonuclease 3 (225 aa).

An RNase III domain is found at 5–127 (LDRLQRSLGH…VFAATFLDQG (123 aa)). Glutamate 40 contributes to the Mg(2+) binding site. Aspartate 44 is an active-site residue. The Mg(2+) site is built by aspartate 113 and glutamate 116. Residue glutamate 116 is part of the active site. The DRBM domain maps to 154–224 (DPKTALQELL…AELALAQLRK (71 aa)).

The protein belongs to the ribonuclease III family. In terms of assembly, homodimer. Requires Mg(2+) as cofactor.

It localises to the cytoplasm. It carries out the reaction Endonucleolytic cleavage to 5'-phosphomonoester.. In terms of biological role, digests double-stranded RNA. Involved in the processing of primary rRNA transcript to yield the immediate precursors to the large and small rRNAs (23S and 16S). Processes some mRNAs, and tRNAs when they are encoded in the rRNA operon. Processes pre-crRNA and tracrRNA of type II CRISPR loci if present in the organism. The sequence is that of Ribonuclease 3 from Aromatoleum aromaticum (strain DSM 19018 / LMG 30748 / EbN1) (Azoarcus sp. (strain EbN1)).